We begin with the raw amino-acid sequence, 471 residues long: Trehalose-binding lipoprotein LpqY (471 aa).

An N-terminal signal peptide occupies residues 1-28 (MDGRQVVRARRWCATAAVALMTASTVAA). A lipid anchor (N-palmitoyl cysteine) is attached at C29. C29 carries S-diacylglycerol cysteine lipidation. Positions 45, 46, 79, 100, 154, 198, 279, 281, 354, and 424 each coordinate alpha,alpha-trehalose. A disulfide bridge connects residues C57 and C375.

This sequence belongs to the bacterial solute-binding protein 1 family. In terms of assembly, monomer. The complex is composed of two ATP-binding proteins (SugC), two transmembrane proteins (SugA and SugB) and a solute-binding protein (LpqY).

It localises to the cell inner membrane. Part of the ABC transporter complex LpqY-SugA-SugB-SugC, which is highly specific for uptake of trehalose. Involved in the recycling of extracellular trehalose released from trehalose-containing molecules synthesized by M.thermoresistibile. Trehalose uptake is essential for virulence. Binds deuterated trehalose with similar high affinity to trehalose, trehalose analogs including galactotrehalose, 4-azido-4-deoxy-trehalose, 6-azido-6-deoxy-trehalose, 3-azido-3-deoxy-trehalose and mannotrehalose in the order of decreasing affinity, respectively, and 2-azido-2-deoxy-trehalose and kojibiose (alpha1,2-glycosidic bond) with very low affinity. Does not recognize single glucose, 6-amino-6-deoxy-trehalose, trehalose-6-phosphate, nigerose (alpha1,3-glycosidic bond), maltose (alpha1,4-glycosidic bond), isomaltose (alpha1,6-glycosidic bond) or glycerophosphocholine. Decreased recognition of alpha,beta-trehalose and almost no recognition of beta,beta-trehalose. Substrate specificity indicates a strict requirement for an alpha1,1-linked disaccharide. The sequence is that of Trehalose-binding lipoprotein LpqY from Mycolicibacterium thermoresistibile (strain ATCC 19527 / DSM 44167 / CIP 105390 / JCM 6362 / NCTC 10409 / 316) (Mycobacterium thermoresistibile).